A 654-amino-acid chain; its full sequence is Fructose-1,6-bisphosphatase class 3 (654 aa).

It belongs to the FBPase class 3 family. Requires Mn(2+) as cofactor.

It carries out the reaction beta-D-fructose 1,6-bisphosphate + H2O = beta-D-fructose 6-phosphate + phosphate. It functions in the pathway carbohydrate biosynthesis; gluconeogenesis. This Staphylococcus haemolyticus (strain JCSC1435) protein is Fructose-1,6-bisphosphatase class 3.